The sequence spans 621 residues: Endoglucanase 25 (621 aa).

Positions 1-26 (MYGRDPWGGPLEINTADSATDDDRSR) are disordered. Topologically, residues 1–70 (MYGRDPWGGP…DLGCIIVSRK (70 aa)) are cytoplasmic. Residues 48–49 (LL) form a polarized targeting signal 1 (PTS1) region. Residues 59-62 (YVDL) are polarized targeting signal 2 (PTS2). The chain crosses the membrane as a helical; Signal-anchor for type II membrane protein span at residues 71 to 91 (IFVWTVGTLVAAALLAGFITL). The Extracellular portion of the chain corresponds to 92-621 (IVKTVPRHHP…PPPPPAPWKP (530 aa)). 2 N-linked (GlcNAc...) asparagine glycosylation sites follow: Asn-108 and Asn-133. Residue Asp-165 is the Nucleophile of the active site. N-linked (GlcNAc...) asparagine glycans are attached at residues Asn-216, Asn-324, Asn-345, Asn-408, and Asn-425. Catalysis depends on residues His-513 and Asp-561. N-linked (GlcNAc...) asparagine glycosylation is present at Asn-567. Residue Glu-570 is part of the active site.

The protein belongs to the glycosyl hydrolase 9 (cellulase E) family. In terms of processing, glycosylated. N-glycosylation of KOR in the endoplasmic reticulum followed by N-glycan modifications in the Golgi are essential for catalytic activity. In terms of tissue distribution, highly expressed in roots and stems, at intermediate levels in leaves and flowers, and at lower levels in siliques. Expressed in xylem (at protein level).

The protein localises to the cell membrane. The enzyme catalyses Endohydrolysis of (1-&gt;4)-beta-D-glucosidic linkages in cellulose, lichenin and cereal beta-D-glucans.. In terms of biological role, required for cellulose microfibril formation. Involved in cell wall assembly during cell elongation and cell plate maturation in cytokinesis. Required for secondary cell wall formation in the developing xylem. May cycle through different intracellular compartments, including plasma membrane. The chain is Endoglucanase 25 (KOR) from Arabidopsis thaliana (Mouse-ear cress).